Consider the following 85-residue polypeptide: U1-ctenitoxin-Pn1a (85 aa).

The N-terminal stretch at 1–16 (MKVAIVFLSLLVLAFA) is a signal peptide. A propeptide spanning residues 17-34 (SESIEENREEFPVEESAR) is cleaved from the precursor. Cystine bridges form between cysteine 35–cysteine 49, cysteine 42–cysteine 55, cysteine 46–cysteine 81, cysteine 48–cysteine 65, and cysteine 57–cysteine 63. The propeptide occupies 82–85 (QNKI).

It belongs to the neurotoxin 03 (Tx2) family. 05 subfamily. As to expression, expressed by the venom gland.

Its subcellular location is the secreted. Its function is as follows. Insecticidal neurotoxin that reversibly inhibits the N-methyl-D-aspartate (NMDA)-subtype of ionotropic glutamate receptor (GRIN) and inhibits inactivation of insect sodium channels (Nav). In vivo, is highly toxic to insects. The chain is U1-ctenitoxin-Pn1a from Phoneutria nigriventer (Brazilian armed spider).